The chain runs to 644 residues: Threonine--tRNA ligase (644 aa).

The region spanning 1-61 (MPDIQLPDGS…DQDAEVAIVT (61 aa)) is the TGS domain. Residues 242–535 (DHRRIGTELE…LIEHYEGKFP (294 aa)) are catalytic. Positions 335, 386, and 512 each coordinate Zn(2+).

This sequence belongs to the class-II aminoacyl-tRNA synthetase family. Homodimer. It depends on Zn(2+) as a cofactor.

It is found in the cytoplasm. The enzyme catalyses tRNA(Thr) + L-threonine + ATP = L-threonyl-tRNA(Thr) + AMP + diphosphate + H(+). Catalyzes the attachment of threonine to tRNA(Thr) in a two-step reaction: L-threonine is first activated by ATP to form Thr-AMP and then transferred to the acceptor end of tRNA(Thr). Also edits incorrectly charged L-seryl-tRNA(Thr). The chain is Threonine--tRNA ligase from Acidithiobacillus ferrooxidans (strain ATCC 23270 / DSM 14882 / CIP 104768 / NCIMB 8455) (Ferrobacillus ferrooxidans (strain ATCC 23270)).